Consider the following 1524-residue polypeptide: MKKEVRKVRIALASPEKIRSWSYGEVEKPETINYRTLKPERDGLFDERIFGPIKDYECACGKYKRQRFEGKVCERCGVEVTRSIVRRYRMGHIELATPAAHIWFVKDVPSKIGTLLDLSATELEQVLYFNKYIVLDPKGAVLDGVPVEKRQLLTDEEYRELRYGKQETYPLPAGVDALVKDGEEVVKGQELAPGVVSRMDGVALYRFPRRVRVDYLRKERAALRIPLSAWVEKEAYRPGEVLAELSEPYLFRAEESGVVELKDLAEGHLIYLRQEEEVVARYFLPAGMTPLVVEGEIVEVGQPLAEGKGLLRLPRHMTAKEVEAEEEGDSVHLTLFLEWTEPKDYKVAPHMNVIVPEGAKVQAGEKIVAAIDPEEEVIAEAEGVVHLHEPASILVVKARVYPFEDDVEVTTGDRVAPGDVLADGGKVKSEIYGRVEVDLVRNVVRVVESYDIDARMGAEAIQELLKELDLEKLERELLEEMKHPSRARRAKARKRLEVVRAFLDSGNRPEWMILEAVPVLPPDLRPMVQVDGGRFATSDLNDLYRRLINRNNRLKKLLAQGAPEIIIRNEKRMLQEAVDAVIDNGRRGSPVTNPGSERPLRSLTDILSGKQGRFRQNLLGKRVDYSGRSVIVVGPQLKLHQCGLPKRMALELFKPFLLKKMEEKAFAPNVKAARRMLERQRDIKDEVWDALEEVIHGKVVLLNRAPTLHRLGIQAFQPVLVEGQSIQLHPLVCEAFNADFDGDQMAVHVPLSSFAQAEARIQMLSAHNLLSPASGEPLAKPSRDIILGLYYITQVRKEKKGAGMAFATPEEALAAYERGEVALNAPIVVAGRETSVGRLKFVFANPDEALLAVAHGLLDLQDVVTVRYLGRRLETSPGRILFARIVGEAVGDEKVAQELIQMDVPQEKNSLKDLVYQAFLRLGMEKTARLLDALKYYGFTLSTTSGITIGIDDAVIPEEKQRYLEEADRKLRQIEQAYEMGFLTDRERYDQVIQLWTETTEKVTQAVFKNFEENYPFNPLYVMAQSGARGNPQQIRQLCGMRGLMQKPSGETFEVPVRSSFREGLTVLEYFISSHGARKGGADTALRTADSGYLTRKLVDVAHEIVVREADCGTTNYISVPLFQMDEVTRTLRLRKRSDIESGLYGRVLAREVEALGRRLEEGRYLSLEDVHFLIKAAEAGEVREVPVRSPLTCQTRYGVCQKCYGYDLSMARPVSIGEAVGVVAAESIGEPGTQLTMRTFHTGGVAVGTDITQGLPRVIELFEARRPKAKAVISEIDGVVRIEEGEDRLSVFVESEGFSKEYKLPKDARLLVKDGDYVEAGQPLTRGAIDPHQLLEAKGPEAVERYLVDEIQKVYRAQGVKLHDKHIEIVVRQMLKYVEVTDPGDSRLLEGQVLEKWDVEALNERLIAEGKVPVAWKPLLMGVTKSALSTKSWLSAASFQNTTHVLTEAAIAGKKDELIGLKENVILGRLIPAGTGSDFVRFTQVVDQRTLKAIEEARKEAVEAKEKEAPRRPVRREQPGKGL.

Zn(2+)-binding residues include Cys-58, Cys-60, Cys-73, and Cys-76. Positions 739, 741, and 743 each coordinate Mg(2+). Zn(2+)-binding residues include Cys-1112, Cys-1194, Cys-1201, and Cys-1204. The tract at residues Ala-1502–Leu-1524 is disordered.

The protein belongs to the RNA polymerase beta' chain family. As to quaternary structure, the RNAP catalytic core consists of 2 alpha, 1 beta, 1 beta' and 1 omega subunit. When a sigma factor is associated with the core the holoenzyme is formed, which can initiate transcription. Mg(2+) serves as cofactor. Zn(2+) is required as a cofactor.

It carries out the reaction RNA(n) + a ribonucleoside 5'-triphosphate = RNA(n+1) + diphosphate. Functionally, DNA-dependent RNA polymerase catalyzes the transcription of DNA into RNA using the four ribonucleoside triphosphates as substrates. This Thermus aquaticus protein is DNA-directed RNA polymerase subunit beta'.